We begin with the raw amino-acid sequence, 46 residues long: MEKKLEEVKQLLFRLELDIKETTDSLRNINKSIDQLDKYNYAMKIS.

The protein belongs to the DegQ family.

In terms of biological role, stimulates the phosphotransfer from phospho-DegS to DegU. Affects protease and levansucrose production. This Bacillus subtilis (strain 168) protein is Degradation enzyme regulation protein DegQ (degQ).